We begin with the raw amino-acid sequence, 1941 residues long: Myosin-2 (1941 aa).

In terms of domain architecture, Myosin N-terminal SH3-like spans 33–82 (DAKTSVFVAEPKESFVKGTIQSREGGKVTVKTEGGATLTVKDDQVFPMNP). Phosphothreonine is present on residues Thr64 and Thr69. The Myosin motor domain maps to 86–784 (DKIEDMAMMT…LLGLLEEMRD (699 aa)). The residue at position 130 (Lys130) is an N6,N6,N6-trimethyllysine. Residue 179 to 186 (GESGAGKT) participates in ATP binding. A Phosphotyrosine modification is found at Tyr389. The residue at position 392 (Ser392) is a Phosphoserine. Phosphothreonine is present on Thr419. Position 625 is a phosphoserine (Ser625). An actin-binding region spans residues 661 to 683 (LNKLMTNLRSTHPHFVRCIIPNE). His759 carries the pros-methylhistidine modification. The interval 763-777 (KFGHTKVFFKAGLLG) is actin-binding. An IQ domain is found at 787 to 816 (LAQLITRTQARCRGFLARVEYQRMVERREA). The stretch at 845–1941 (LLKSAETEKE…EVHTKVISEE (1097 aa)) forms a coiled coil. Phosphoserine occurs at positions 1094 and 1098. 2 disordered regions span residues 1128-1149 (IEAERASRAKAEKQRSDLSREL) and 1155-1174 (RLEEAGGATSAQIEMNKKRE). A compositionally biased stretch (basic and acidic residues) spans 1130–1149 (AERASRAKAEKQRSDLSREL). Phosphoserine is present on residues Ser1164 and Ser1239. Thr1243 carries the post-translational modification Phosphothreonine. Ser1245 bears the Phosphoserine mark. The residue at position 1257 (Thr1257) is a Phosphothreonine. Phosphoserine is present on Ser1263. Thr1288 bears the Phosphothreonine mark. Phosphoserine occurs at positions 1290, 1294, 1305, and 1308. Thr1469 carries the phosphothreonine modification. A Phosphoserine modification is found at Ser1476. Tyr1494 carries the post-translational modification Phosphotyrosine. Residue Ser1497 is modified to Phosphoserine. Phosphothreonine is present on Thr1503. Phosphoserine is present on Ser1516. The residue at position 1519 (Thr1519) is a Phosphothreonine. Phosphoserine is present on residues Ser1556, Ser1576, Ser1602, Ser1605, Ser1716, and Ser1728. Phosphothreonine is present on residues Thr1732 and Thr1738. The residue at position 1741 (Ser1741) is a Phosphoserine.

Belongs to the TRAFAC class myosin-kinesin ATPase superfamily. Myosin family. As to quaternary structure, muscle myosin is a hexameric protein that consists of 2 heavy chain subunits (MHC), 2 alkali light chain subunits (MLC) and 2 regulatory light chain subunits (MLC-2). Interacts with GCSAM.

It localises to the cytoplasm. The protein resides in the myofibril. Its function is as follows. Myosins are actin-based motor molecules with ATPase activity essential for muscle contraction. This chain is Myosin-2, found in Homo sapiens (Human).